Consider the following 1066-residue polypeptide: FHIP family protein GI14169 (1066 aa).

Residues 1-11 (MSWLRTSPLRQ) show a composition bias toward polar residues. The segment at 1 to 35 (MSWLRTSPLRQSLTRSGSSSGNGSSGTATTMRQRP) is disordered. Over residues 12-30 (SLTRSGSSSGNGSSGTATT) the composition is skewed to low complexity. Serine 500 carries the post-translational modification Phosphoserine. The disordered stretch occupies residues 651-682 (GIDVTTTTTASASDTDLEHNNNSSSISSGRRD). Low complexity predominate over residues 655 to 678 (TTTTTASASDTDLEHNNNSSSISS). The residue at position 820 (serine 820) is a Phosphoserine. Disordered stretches follow at residues 821–913 (PLHQ…GNSA) and 935–1007 (SGGE…TGNF). The span at 822 to 855 (LHQQLQHQQQHQQLAQTNSHTQQQQQQQQQQAQQ) shows a compositional bias: low complexity. Polar residues predominate over residues 856–874 (RSTYATLSAATPVQASPTS). Positions 890-913 (SRSITSMFSRRSTSSTPASNGNSA) are enriched in low complexity. A compositionally biased stretch (polar residues) spans 947–971 (QDSTRGNTCETSLSTAPRQEPQTNV). The segment covering 972 to 997 (GSSSNSSIGSSTQTLSGTHSSSTLHG) has biased composition (low complexity).

Belongs to the FHIP family.

This Drosophila mojavensis (Fruit fly) protein is FHIP family protein GI14169.